A 357-amino-acid chain; its full sequence is Protein RecA (357 aa).

79–86 (GPESSGKT) contributes to the ATP binding site.

The protein belongs to the RecA family.

It is found in the cytoplasm. In terms of biological role, can catalyze the hydrolysis of ATP in the presence of single-stranded DNA, the ATP-dependent uptake of single-stranded DNA by duplex DNA, and the ATP-dependent hybridization of homologous single-stranded DNAs. It interacts with LexA causing its activation and leading to its autocatalytic cleavage. The protein is Protein RecA of Chloroherpeton thalassium (strain ATCC 35110 / GB-78).